The chain runs to 493 residues: Bifunctional protein GlmU (493 aa).

The tract at residues 1–246 (MTGELDVDGE…SWLVAGINDR (246 aa)) is pyrophosphorylase. Residues 21 to 24 (LAAG), lysine 35, glutamine 88, 93 to 94 (GT), 117 to 119 (SGD), glycine 156, glutamate 171, asparagine 186, and asparagine 244 each bind UDP-N-acetyl-alpha-D-glucosamine. Mg(2+) is bound at residue aspartate 119. Mg(2+) is bound at residue asparagine 244. Positions 247–267 (VQLTAAATELNARIIRRWQLA) are linker. The interval 268 to 493 (GVTIHDPRTT…DGPADDASDA (226 aa)) is N-acetyltransferase. Arginine 349 and lysine 367 together coordinate UDP-N-acetyl-alpha-D-glucosamine. The Proton acceptor role is filled by histidine 379. Residues tyrosine 382 and asparagine 393 each contribute to the UDP-N-acetyl-alpha-D-glucosamine site. Acetyl-CoA is bound by residues alanine 396, 402-403 (NY), serine 421, and alanine 439. The interval 470–493 (RPGTPEARAAVEAADGPADDASDA) is disordered.

It in the N-terminal section; belongs to the N-acetylglucosamine-1-phosphate uridyltransferase family. This sequence in the C-terminal section; belongs to the transferase hexapeptide repeat family. In terms of assembly, homotrimer. Mg(2+) is required as a cofactor.

The protein resides in the cytoplasm. It carries out the reaction alpha-D-glucosamine 1-phosphate + acetyl-CoA = N-acetyl-alpha-D-glucosamine 1-phosphate + CoA + H(+). The catalysed reaction is N-acetyl-alpha-D-glucosamine 1-phosphate + UTP + H(+) = UDP-N-acetyl-alpha-D-glucosamine + diphosphate. The protein operates within nucleotide-sugar biosynthesis; UDP-N-acetyl-alpha-D-glucosamine biosynthesis; N-acetyl-alpha-D-glucosamine 1-phosphate from alpha-D-glucosamine 6-phosphate (route II): step 2/2. Its pathway is nucleotide-sugar biosynthesis; UDP-N-acetyl-alpha-D-glucosamine biosynthesis; UDP-N-acetyl-alpha-D-glucosamine from N-acetyl-alpha-D-glucosamine 1-phosphate: step 1/1. It participates in bacterial outer membrane biogenesis; LPS lipid A biosynthesis. Functionally, catalyzes the last two sequential reactions in the de novo biosynthetic pathway for UDP-N-acetylglucosamine (UDP-GlcNAc). The C-terminal domain catalyzes the transfer of acetyl group from acetyl coenzyme A to glucosamine-1-phosphate (GlcN-1-P) to produce N-acetylglucosamine-1-phosphate (GlcNAc-1-P), which is converted into UDP-GlcNAc by the transfer of uridine 5-monophosphate (from uridine 5-triphosphate), a reaction catalyzed by the N-terminal domain. The sequence is that of Bifunctional protein GlmU from Clavibacter sepedonicus (Clavibacter michiganensis subsp. sepedonicus).